We begin with the raw amino-acid sequence, 582 residues long: ATP-dependent lipid A-core flippase (582 aa).

The next 5 membrane-spanning stretches (helical) occupy residues 16 to 36 (LWPTIAPFKAGLIVAGVALIL), 64 to 84 (LMWMPLVVIGLMILRGITSYI), 153 to 173 (IIGLFIMMFYYSWQLSIILIV), 253 to 273 (PIIQLIASLALAFVLYAASFP), and 275 to 295 (VMDSLTAGTITVVFSSMIALM). An ABC transmembrane type-1 domain is found at 28-310 (IVAGVALILN…LTNVNAQFQR (283 aa)). The 237-residue stretch at 342–578 (VEFRNVTFTY…RGVYAQLHKM (237 aa)) folds into the ABC transporter domain. 376–383 (GRSGSGKS) lines the ATP pocket.

It belongs to the ABC transporter superfamily. Lipid exporter (TC 3.A.1.106) family. As to quaternary structure, homodimer.

It localises to the cell inner membrane. The enzyme catalyses ATP + H2O + lipid A-core oligosaccharideSide 1 = ADP + phosphate + lipid A-core oligosaccharideSide 2.. Its function is as follows. Involved in lipopolysaccharide (LPS) biosynthesis. Translocates lipid A-core from the inner to the outer leaflet of the inner membrane. Transmembrane domains (TMD) form a pore in the inner membrane and the ATP-binding domain (NBD) is responsible for energy generation. The protein is ATP-dependent lipid A-core flippase of Escherichia coli O6:K15:H31 (strain 536 / UPEC).